Reading from the N-terminus, the 1007-residue chain is Kinesin-like protein KIN-14F (1007 aa).

Positions 41–187 constitute a Calponin-homology (CH) domain; it reads AARRNEAAGW…CVLALKSYGD (147 aa). The 326-residue stretch at 390-715 folds into the Kinesin motor domain; it reads SIRVYCRVRP…LKFAERVSTV (326 aa). 472–479 lines the ATP pocket; that stretch reads GQTGSGKT. Residues 718–748 are a coiled coil; it reads GAARLNKESGEVKELKEQIARLKSSLAMKDS. Basic and acidic residues predominate over residues 885-904; sequence KQYLRNNSRKKDGNEFEQQR. Disordered regions lie at residues 885-924 and 944-1007; these read KQYL…ATSD and SENG…AGTK. The span at 963–1001 shows a compositional bias: polar residues; that stretch reads TRTPLHSQIPSASRKTSNGNRSGRQPLSGSDSRRLSSNG.

Belongs to the TRAFAC class myosin-kinesin ATPase superfamily. Kinesin family. KIN-14 subfamily.

The sequence is that of Kinesin-like protein KIN-14F from Oryza sativa subsp. japonica (Rice).